We begin with the raw amino-acid sequence, 667 residues long: Gamma-tubulin complex component 4 (667 aa).

The tract at residues His425–Ala445 is disordered.

Belongs to the TUBGCP family. Component of the gamma-tubulin ring complex (gTuRC) consisting of TUBGCP2, TUBGCP3, TUBGCP4, TUBGCP5 and TUBGCP6 and gamma-tubulin TUBG1 or TUBG2. TUBGCP2, TUBGCP3, TUBGCP4, TUBGCP5 and TUBGCP6 assemble in a 5:5:2:1:1 stoichiometry; each is associated with a gamma-tubulin, thereby arranging 14 gamma-tubulins in a helical manner. Gamma-tubulin at the first position is blocked by TUBGCP3 at the last position, allowing 13 protafilaments to grow into a microtubule. The gTuRC (via TUBGCP3 and TUBGCP6) interacts with ACTB and MZT1; the interactions form a luminal bridge that stabilizes the initial structure during complex assembly. The gTuRC (via TUBGCP2) interacts with MZT2A/MZT2B and CDK5RAP2 (via CM1 motif); the interactions play a role in gTuRC activation. Interacts with NINL. Interacts with ATF5; the ATF5:PCNT:polyglutamylated tubulin (PGT) tripartite unites the mother centriole and the pericentriolar material (PCM) in the centrosome. Ubiquitously expressed.

Its subcellular location is the cytoplasm. It localises to the cytoskeleton. The protein localises to the microtubule organizing center. It is found in the centrosome. Functionally, component of the gamma-tubulin ring complex (gTuRC) which mediates microtubule nucleation. The gTuRC regulates the minus-end nucleation of alpha-beta tubulin heterodimers that grow into microtubule protafilaments, a critical step in centrosome duplication and spindle formation. The sequence is that of Gamma-tubulin complex component 4 (TUBGCP4) from Homo sapiens (Human).